The primary structure comprises 332 residues: Thiosulfate-binding protein (332 aa).

A signal peptide spans 1 to 22 (MKRLFSASLLAAGLALGGAAHA).

This sequence belongs to the prokaryotic sulfate-binding protein family.

The protein localises to the periplasm. Functionally, binds thiosulfate specifically and with high affinity. Has no detectable affinity for sulfate. In Pseudomonas aeruginosa (strain ATCC 15692 / DSM 22644 / CIP 104116 / JCM 14847 / LMG 12228 / 1C / PRS 101 / PAO1), this protein is Thiosulfate-binding protein.